The chain runs to 125 residues: Small ribosomal subunit protein eS26 (125 aa).

Belongs to the eukaryotic ribosomal protein eS26 family.

This is Small ribosomal subunit protein eS26 (RPS26) from Sterkiella nova (Ciliate).